Here is a 426-residue protein sequence, read N- to C-terminus: Glutamate-1-semialdehyde 2,1-aminomutase (426 aa).

Position 265 is an N6-(pyridoxal phosphate)lysine (K265).

The protein belongs to the class-III pyridoxal-phosphate-dependent aminotransferase family. HemL subfamily. Homodimer. Requires pyridoxal 5'-phosphate as cofactor.

Its subcellular location is the cytoplasm. The enzyme catalyses (S)-4-amino-5-oxopentanoate = 5-aminolevulinate. It functions in the pathway porphyrin-containing compound metabolism; protoporphyrin-IX biosynthesis; 5-aminolevulinate from L-glutamyl-tRNA(Glu): step 2/2. This chain is Glutamate-1-semialdehyde 2,1-aminomutase, found in Alteromonas mediterranea (strain DSM 17117 / CIP 110805 / LMG 28347 / Deep ecotype).